The chain runs to 442 residues: Methionine aminopeptidase 2 (442 aa).

The disordered stretch occupies residues 1-81; that stretch reads MAAQAPTEAL…APTAQSDPPR (81 aa). The segment covering 56-72 has biased composition (basic residues); it reads PLRRRRRRRRTRKKKKA. A substrate-binding site is contributed by H196. 3 residues coordinate a divalent metal cation: D216, D227, and H296. H304 is a substrate binding site. A divalent metal cation-binding residues include E329 and E423.

It belongs to the peptidase M24A family. Methionine aminopeptidase eukaryotic type 2 subfamily. Requires Co(2+) as cofactor. The cofactor is Zn(2+). It depends on Mn(2+) as a cofactor. Fe(2+) serves as cofactor.

It localises to the cytoplasm. The catalysed reaction is Release of N-terminal amino acids, preferentially methionine, from peptides and arylamides.. In terms of biological role, cotranslationally removes the N-terminal methionine from nascent proteins. The N-terminal methionine is often cleaved when the second residue in the primary sequence is small and uncharged (Met-Ala-, Cys, Gly, Pro, Ser, Thr, or Val). The polypeptide is Methionine aminopeptidase 2 (Verticillium alfalfae (strain VaMs.102 / ATCC MYA-4576 / FGSC 10136) (Verticillium wilt of alfalfa)).